Reading from the N-terminus, the 1279-residue chain is Maestro heat-like repeat-containing protein family member 7 (1279 aa).

Positions 1 to 145 are disordered; that stretch reads MALSRGTSLI…NSSRPCSEDV (145 aa). A compositionally biased stretch (low complexity) spans 39–61; that stretch reads PDLALAPPPEHALALTPALHPAL. Composition is skewed to polar residues over residues 71–106 and 124–140; these read PVSN…NHTS and PSST…SSRP. Asn-200, Asn-210, Asn-255, Asn-267, and Asn-296 each carry an N-linked (GlcNAc...) asparagine glycan. Ser-356 carries the post-translational modification Phosphoserine. A glycan (N-linked (GlcNAc...) asparagine) is linked at Asn-541. 2 helical membrane-spanning segments follow: residues 548–568 and 722–742; these read TLVT…LLLG and LLPI…ALLM. 4 HEAT repeats span residues 913 to 950, 992 to 1029, 1035 to 1072, and 1080 to 1117; these read QELC…MEQV, AKVQ…GQGK, AVYV…KLQT, and EQLT…FMNW.

It localises to the membrane. The chain is Maestro heat-like repeat-containing protein family member 7 (Mroh7) from Mus musculus (Mouse).